The chain runs to 397 residues: Purine ribonucleoside efflux pump NepI (397 aa).

At 1 to 21 (MNENIAEKFRADGVARPNWSA) the chain is on the cytoplasmic side. A helical transmembrane segment spans residues 22 to 42 (VFAVAFCVACLITVEFLPVSL). Over 43–54 (LTPMAQDLGISE) the chain is Periplasmic. Residues 55–75 (GVAGQSVTVTAFVAMFSSLFI) form a helical membrane-spanning segment. Residues 76–85 (TQIIQATDRR) are Cytoplasmic-facing. The helical transmembrane segment at 86–106 (YIVILFAVLLTASCLMVSFAN) threads the bilayer. Position 107 (Ser-107) is a topological domain, periplasmic. A helical membrane pass occupies residues 108 to 128 (FTLLLLGRACLGLALGGFWAI). At 129–147 (SASLTMRLVPARTVPKALS) the chain is on the cytoplasmic side. Residues 148–168 (VIFGAVSIALVIAAPLGSFLG) form a helical membrane-spanning segment. The Periplasmic portion of the chain corresponds to 169 to 175 (GIIGWRN). The chain crosses the membrane as a helical span at residues 176-196 (VFNAAAVMGVLCVIWVVKSLP). At 197-215 (SLPGEPSHQKQNMFSLLQR) the chain is on the cytoplasmic side. The chain crosses the membrane as a helical span at residues 216–236 (PGVMAGMIAIFMSFAGQFAFF). The Periplasmic segment spans residues 237 to 255 (TYIRPVYMNLAGFDVDGLT). A helical membrane pass occupies residues 256-276 (LVLLSFGIASFVGTSFSSYVL). Topologically, residues 277–281 (KRSVK) are cytoplasmic. A helical membrane pass occupies residues 282 to 302 (LALAGAPLLLALSALTLIVWG). Residues 303 to 305 (SDK) lie on the Periplasmic side of the membrane. Residues 306 to 326 (TVAAAIAIIWGLAFALVPVGW) traverse the membrane as a helical segment. At 327–343 (STWITRSLADQAEKAGS) the chain is on the cytoplasmic side. A helical transmembrane segment spans residues 344-364 (IQVAVIQLANTCGAAVGGYAL). Over 365-366 (DN) the chain is Periplasmic. Residues 367–387 (FGLLSPLALSGGLMLLTALVV) traverse the membrane as a helical segment. Over 388–397 (AAKVRITPMS) the chain is Cytoplasmic.

This sequence belongs to the major facilitator superfamily. DHA1 family. NepI (TC 2.A.1.2.26) subfamily.

Its subcellular location is the cell inner membrane. It carries out the reaction inosine(in) + H(+)(out) = inosine(out) + H(+)(in). The enzyme catalyses guanosine(in) + H(+)(out) = guanosine(out) + H(+)(in). Its function is as follows. Involved in the efflux of purine ribonucleosides, such as inosine and guanosine. The chain is Purine ribonucleoside efflux pump NepI from Salmonella paratyphi A (strain ATCC 9150 / SARB42).